The following is a 495-amino-acid chain: Glutamyl-tRNA(Gln) amidotransferase subunit A (495 aa).

Active-site charge relay system residues include K75 and S150. The active-site Acyl-ester intermediate is the S174.

This sequence belongs to the amidase family. GatA subfamily. As to quaternary structure, heterotrimer of A, B and C subunits.

It catalyses the reaction L-glutamyl-tRNA(Gln) + L-glutamine + ATP + H2O = L-glutaminyl-tRNA(Gln) + L-glutamate + ADP + phosphate + H(+). Allows the formation of correctly charged Gln-tRNA(Gln) through the transamidation of misacylated Glu-tRNA(Gln) in organisms which lack glutaminyl-tRNA synthetase. The reaction takes place in the presence of glutamine and ATP through an activated gamma-phospho-Glu-tRNA(Gln). The chain is Glutamyl-tRNA(Gln) amidotransferase subunit A from Paraburkholderia phytofirmans (strain DSM 17436 / LMG 22146 / PsJN) (Burkholderia phytofirmans).